The primary structure comprises 73 residues: MAKEDVIEVEGTVTEALPNTQFRVELDNGHNVLAHISGKMRMNYIRILPGDRVKVELSPYDLSRGRITYRYRS.

In terms of domain architecture, S1-like spans 1–72 (MAKEDVIEVE…SRGRITYRYR (72 aa)).

The protein belongs to the IF-1 family. In terms of assembly, component of the 30S ribosomal translation pre-initiation complex which assembles on the 30S ribosome in the order IF-2 and IF-3, IF-1 and N-formylmethionyl-tRNA(fMet); mRNA recruitment can occur at any time during PIC assembly.

The protein localises to the cytoplasm. Its function is as follows. One of the essential components for the initiation of protein synthesis. Stabilizes the binding of IF-2 and IF-3 on the 30S subunit to which N-formylmethionyl-tRNA(fMet) subsequently binds. Helps modulate mRNA selection, yielding the 30S pre-initiation complex (PIC). Upon addition of the 50S ribosomal subunit IF-1, IF-2 and IF-3 are released leaving the mature 70S translation initiation complex. The polypeptide is Translation initiation factor IF-1 (Rubrobacter xylanophilus (strain DSM 9941 / JCM 11954 / NBRC 16129 / PRD-1)).